The primary structure comprises 629 residues: tRNA uridine 5-carboxymethylaminomethyl modification enzyme MnmG (629 aa).

Residues 13–18, V125, and S180 each bind FAD; that span reads GGGHAG. Position 273 to 287 (273 to 287) interacts with NAD(+); that stretch reads GPRYCPSIEDKVMRF. Residue Q370 coordinates FAD.

The protein belongs to the MnmG family. In terms of assembly, homodimer. Heterotetramer of two MnmE and two MnmG subunits. It depends on FAD as a cofactor.

The protein resides in the cytoplasm. Functionally, NAD-binding protein involved in the addition of a carboxymethylaminomethyl (cmnm) group at the wobble position (U34) of certain tRNAs, forming tRNA-cmnm(5)s(2)U34. The polypeptide is tRNA uridine 5-carboxymethylaminomethyl modification enzyme MnmG (Shigella flexneri serotype 5b (strain 8401)).